The primary structure comprises 82 residues: MVGSGAPQRGSAAATASMRRRKPTSGAGGGGASGGAAGSMLQFYTDDAPGLKISPNVVLIMSIGFIAFVAVLHVMGKLYFVK.

Methionine 1 carries the N-acetylmethionine modification. The segment at 1 to 34 (MVGSGAPQRGSAAATASMRRRKPTSGAGGGGASG) is disordered. Residues 1–55 (MVGSGAPQRGSAAATASMRRRKPTSGAGGGGASGGAAGSMLQFYTDDAPGLKISP) are Cytoplasmic-facing. The helical transmembrane segment at 56–76 (NVVLIMSIGFIAFVAVLHVMG) threads the bilayer.

The protein belongs to the SEC61-beta family. As to quaternary structure, heterotrimeric complex composed of SEC61-alpha, SEC61-beta and SEC61-gamma.

It is found in the endoplasmic reticulum membrane. Functionally, necessary for protein translocation in the endoplasmic reticulum. The protein is Protein transport protein Sec61 subunit beta of Arabidopsis thaliana (Mouse-ear cress).